The primary structure comprises 238 residues: Probable RNA/DNA demethylase ALKBH6 (238 aa).

In terms of domain architecture, Fe2OG dioxygenase spans 96 to 227 (PANHVLVNQY…RVSLTIRRVP (132 aa)). Residues N103 and Y105 each contribute to the 2-oxoglutarate site. Fe cation contacts are provided by H114, D116, and H182. 2-oxoglutarate is bound by residues R218 and S220.

The protein belongs to the alkB family. Interacts with VCPKMT. It depends on Fe(2+) as a cofactor.

The protein resides in the cytoplasm. It localises to the nucleus. Probable Fe(2+)/2-oxoglutarate-dependent dioxygenase involved in oxidative demethylation of nucleic acids. Binds nucleic acids with a preference for ssDNA or ssRNA to other types of DNAs. May play a role in nucleic acid damage repair. The sequence is that of Probable RNA/DNA demethylase ALKBH6 (Alkbh6) from Mus musculus (Mouse).